The chain runs to 762 residues: Chondroadherin-like protein (762 aa).

Positions 1–30 are cleaved as a signal peptide; sequence MEGPRSSTHVPLVLPLLVLLLLAPARQAAA. In terms of domain architecture, LRRNT 1 spans 31–62; that stretch reads QRCPQACICDNSRRHVACRYQNLTEVPDAIPE. N-linked (GlcNAc...) asparagine glycosylation is present at Asn-52. 9 LRR repeats span residues 87–108, 111–132, 135–156, 159–180, 183–204, 207–228, 231–252, 255–276, and 279–300; these read HLTH…AFRG, RLLL…ALDG, SLRR…TFGA, ALAT…AFQG, RVRW…ALAG, ALRR…VLSQ, GLAR…DGLA, GLRE…AFAH, and RLHT…QGPG. Residues 310-359 enclose the LRRCT 1 domain; the sequence is NPLWCGCQARPLLEWLARARVRSDGACQGPRRLRGEALDALRPWDLRCPG. Residues 364-390 form a disordered region; it reads EEEELEERAVAGPRAPPRGPPRGPGEE. Pro residues predominate over residues 377–386; that stretch reads RAPPRGPPRG. In terms of domain architecture, LRRNT 2 spans 387 to 425; that stretch reads PGEERAVAPCPRACVCVPESRHSSCEGCGLQAVPRGFPS. An intrachain disulfide couples Cys-396 to Cys-411. LRR repeat units follow at residues 426–447, 450–471, 474–495, 498–519, 522–543, 546–566, 570–591, 594–615, 619–640, and 644–665; these read DTQL…AFPG, HLVS…ALAG, RLIY…ALEG, RLGY…ALRA, SLFS…DLGR, ALRW…GALG, ELEK…ALEG, ALLE…AFQP, SLQH…AFSG, and GLQS…PSLS. N-linked (GlcNAc...) asparagine glycosylation is present at Asn-626. In terms of domain architecture, LRRCT 2 spans 675 to 724; that stretch reads NPFHCDCQLLPLHRWLTGLNLRVGATCATPPNARGQRVKAAAAVFEDCPG. Cystine bridges form between Cys-679–Cys-722 and Cys-681–Cys-701. The segment covering 728-745 has biased composition (basic residues); that stretch reads RKAKRTPASRPSARRTPI. The segment at 728-762 is disordered; that stretch reads RKAKRTPASRPSARRTPIKGRQCGADKVGKEKGRL.

Belongs to the small leucine-rich proteoglycan (SLRP) family. SLRP class IV subfamily. In terms of assembly, associates with collagen and binds to collagen fibrils.

The protein localises to the secreted. The protein resides in the extracellular space. Its subcellular location is the extracellular matrix. Functionally, potential negative modulator of chondrocyte differentiation. Inhibits collagen fibrillogenesis in vitro. May influence chondrocyte's differentiation by acting on its cellular collagenous microenvironment. The sequence is that of Chondroadherin-like protein (CHADL) from Homo sapiens (Human).